We begin with the raw amino-acid sequence, 121 residues long: Large ribosomal subunit protein eL31 (121 aa).

The protein belongs to the eukaryotic ribosomal protein eL31 family.

This chain is Large ribosomal subunit protein eL31 (RPL31), found in Panax ginseng (Korean ginseng).